A 186-amino-acid polypeptide reads, in one-letter code: Elongation factor P (186 aa).

This sequence belongs to the elongation factor P family.

It localises to the cytoplasm. Its pathway is protein biosynthesis; polypeptide chain elongation. Involved in peptide bond synthesis. Stimulates efficient translation and peptide-bond synthesis on native or reconstituted 70S ribosomes in vitro. Probably functions indirectly by altering the affinity of the ribosome for aminoacyl-tRNA, thus increasing their reactivity as acceptors for peptidyl transferase. The protein is Elongation factor P of Clostridium acetobutylicum (strain ATCC 824 / DSM 792 / JCM 1419 / IAM 19013 / LMG 5710 / NBRC 13948 / NRRL B-527 / VKM B-1787 / 2291 / W).